The sequence spans 219 residues: Ribosomal RNA large subunit methyltransferase E (219 aa).

S-adenosyl-L-methionine is bound by residues Gly-60, Trp-62, Asp-85, Asp-101, and Asp-126. Catalysis depends on Lys-166, which acts as the Proton acceptor.

Belongs to the class I-like SAM-binding methyltransferase superfamily. RNA methyltransferase RlmE family.

It localises to the cytoplasm. It catalyses the reaction uridine(2552) in 23S rRNA + S-adenosyl-L-methionine = 2'-O-methyluridine(2552) in 23S rRNA + S-adenosyl-L-homocysteine + H(+). Functionally, specifically methylates the uridine in position 2552 of 23S rRNA at the 2'-O position of the ribose in the fully assembled 50S ribosomal subunit. The sequence is that of Ribosomal RNA large subunit methyltransferase E from Bordetella avium (strain 197N).